We begin with the raw amino-acid sequence, 280 residues long: Probable formate transporter (280 aa).

The next 6 helical transmembrane spans lie at 33–49 (LSFVAGAYIAFGGLLAE), 67–83 (LVFGGVFPVGLMLVVIA), 116–133 (SWVFNLVGALFVAYVLAY), 177–195 (FWRAIGCNWLVCLAVYLAV), 204–219 (SFGIWFPIMAFVCIGF), and 253–272 (LGNIVGGAIFVGCIYWFTYL).

This sequence belongs to the FNT transporter (TC 1.A.16) family.

It is found in the cell membrane. May act as a formate transporter. In Methanobacterium formicicum, this protein is Probable formate transporter (fdhC).